The sequence spans 175 residues: Shikimate kinase (175 aa).

12–17 (GAGKTT) contributes to the ATP binding site. Thr16 serves as a coordination point for Mg(2+). Residues Asp34, Arg58, and Gly80 each coordinate substrate. Arg117 lines the ATP pocket. Position 136 (Arg136) interacts with substrate.

The protein belongs to the shikimate kinase family. Monomer. It depends on Mg(2+) as a cofactor.

The protein localises to the cytoplasm. The enzyme catalyses shikimate + ATP = 3-phosphoshikimate + ADP + H(+). Its pathway is metabolic intermediate biosynthesis; chorismate biosynthesis; chorismate from D-erythrose 4-phosphate and phosphoenolpyruvate: step 5/7. Catalyzes the specific phosphorylation of the 3-hydroxyl group of shikimic acid using ATP as a cosubstrate. This is Shikimate kinase from Saccharopolyspora erythraea (strain ATCC 11635 / DSM 40517 / JCM 4748 / NBRC 13426 / NCIMB 8594 / NRRL 2338).